The primary structure comprises 1401 residues: Lysine-specific demethylase 6A (1401 aa).

The interaction with SUPT6H stretch occupies residues 1–1095; it reads MKSCGVSLAT…TNIDLSDDKK (1095 aa). TPR repeat units follow at residues 95–128, 132–165, 169–203, 207–240, 245–285, 286–319, 321–353, and 355–387; these read SDFF…QSDY, AAFL…DPSF, KEIH…NPCT, AEIQ…ENLS, ATIL…DPNS, GQSW…SEAS, DTWC…DHGH, and AAWM…KNCS. A compositionally biased stretch (polar residues) spans 439-453; the sequence is AMNTAQQNTSDNWSG. The segment at 439–463 is disordered; that stretch reads AMNTAQQNTSDNWSGGNAPPPVEQQ. Omega-N-methylarginine is present on residues Arg519 and Arg549. 3 stretches are compositionally biased toward polar residues: residues 596-606, 619-642, and 660-743; these read NHVTGSGSNGN, HNRT…STQG, and LSST…STAS. The disordered stretch occupies residues 596-745; the sequence is NHVTGSGSNG…ETPNSTASVE (150 aa). Residue Ser769 is modified to Phosphoserine. Disordered regions lie at residues 795–863, 914–941, and 1043–1080; these read GTCD…EESQ, LLDK…PPTP, and FQES…GPFK. Residues 814–833 show a composition bias toward low complexity; sequence SVASSPSSAISTATPSPKST. Phosphothreonine is present on Thr827. A Phosphoserine modification is found at Ser829. A compositionally biased stretch (polar residues) spans 834–848; that stretch reads EQTTTNSVTSLNSPH. The span at 918 to 931 shows a compositional bias: pro residues; sequence CPPPRPPSSPYPPL. Residues 1046-1063 are compositionally biased toward basic and acidic residues; that stretch reads SLREENEKRSHHKDHSDS. The JmjC domain occupies 1095 to 1258; it reads KWKLQLHELT…YKLAVERYEW (164 aa). His1146, Glu1148, and His1226 together coordinate Fe cation. Cys1331, Cys1334, Cys1358, and Cys1361 together coordinate Zn(2+).

This sequence belongs to the UTX family. As to quaternary structure, component of the MLL2/3 complex (also named ASCOM complex), at least composed of KMT2D/MLL2 or KMT2C/MLL3, ASH2L, RBBP5, WDR5, NCOA6, DPY30, KDM6A (or KDM6B), PAXIP1/PTIP, PAGR1 and alpha- and beta-tubulin. Interacts with TLE1. Interacts with SUPT6H. Interacts with SMARCA4. Interacts with PROSER1. The cofactor is L-ascorbate. Requires Fe(2+) as cofactor. In terms of tissue distribution, expressed in brain, heart and spleen.

The protein resides in the nucleus. It catalyses the reaction N(6),N(6),N(6)-trimethyl-L-lysyl(27)-[histone H3] + 2 2-oxoglutarate + 2 O2 = N(6)-methyl-L-lysyl(27)-[histone H3] + 2 formaldehyde + 2 succinate + 2 CO2. Its function is as follows. Histone demethylase that specifically demethylates 'Lys-27' of histone H3, thereby playing a central role in histone code. Demethylates trimethylated and dimethylated but not monomethylated H3 'Lys-27'. Plays a central role in regulation of posterior development, by regulating HOX gene expression. Demethylation of 'Lys-27' of histone H3 is concomitant with methylation of 'Lys-4' of histone H3, and regulates the recruitment of the PRC1 complex and monoubiquitination of histone H2A. Plays a demethylase-independent role in chromatin remodeling to regulate T-box family member-dependent gene expression. This chain is Lysine-specific demethylase 6A (Kdm6a), found in Mus musculus (Mouse).